We begin with the raw amino-acid sequence, 253 residues long: Ubiquinone/menaquinone biosynthesis C-methyltransferase UbiE (253 aa).

Residues threonine 76, aspartate 97, and 125-126 (NA) contribute to the S-adenosyl-L-methionine site.

It belongs to the class I-like SAM-binding methyltransferase superfamily. MenG/UbiE family.

It carries out the reaction a 2-demethylmenaquinol + S-adenosyl-L-methionine = a menaquinol + S-adenosyl-L-homocysteine + H(+). It catalyses the reaction a 2-methoxy-6-(all-trans-polyprenyl)benzene-1,4-diol + S-adenosyl-L-methionine = a 5-methoxy-2-methyl-3-(all-trans-polyprenyl)benzene-1,4-diol + S-adenosyl-L-homocysteine + H(+). It participates in quinol/quinone metabolism; menaquinone biosynthesis; menaquinol from 1,4-dihydroxy-2-naphthoate: step 2/2. It functions in the pathway cofactor biosynthesis; ubiquinone biosynthesis. In terms of biological role, methyltransferase required for the conversion of demethylmenaquinol (DMKH2) to menaquinol (MKH2) and the conversion of 2-polyprenyl-6-methoxy-1,4-benzoquinol (DDMQH2) to 2-polyprenyl-3-methyl-6-methoxy-1,4-benzoquinol (DMQH2). This chain is Ubiquinone/menaquinone biosynthesis C-methyltransferase UbiE, found in Bradyrhizobium sp. (strain BTAi1 / ATCC BAA-1182).